The following is a 352-amino-acid chain: Uroporphyrinogen decarboxylase (352 aa).

Residues 26 to 30 (RQAGR), aspartate 76, tyrosine 153, serine 208, and histidine 323 each bind substrate.

It belongs to the uroporphyrinogen decarboxylase family. Homodimer.

The protein localises to the cytoplasm. The enzyme catalyses uroporphyrinogen III + 4 H(+) = coproporphyrinogen III + 4 CO2. The protein operates within porphyrin-containing compound metabolism; protoporphyrin-IX biosynthesis; coproporphyrinogen-III from 5-aminolevulinate: step 4/4. Functionally, catalyzes the decarboxylation of four acetate groups of uroporphyrinogen-III to yield coproporphyrinogen-III. In Prochlorococcus marinus (strain MIT 9303), this protein is Uroporphyrinogen decarboxylase.